The primary structure comprises 153 residues: 3-hydroxyacyl-[acyl-carrier-protein] dehydratase FabZ (153 aa).

His-57 is an active-site residue.

It belongs to the thioester dehydratase family. FabZ subfamily.

Its subcellular location is the cytoplasm. It carries out the reaction a (3R)-hydroxyacyl-[ACP] = a (2E)-enoyl-[ACP] + H2O. Involved in unsaturated fatty acids biosynthesis. Catalyzes the dehydration of short chain beta-hydroxyacyl-ACPs and long chain saturated and unsaturated beta-hydroxyacyl-ACPs. The protein is 3-hydroxyacyl-[acyl-carrier-protein] dehydratase FabZ of Xanthomonas oryzae pv. oryzae (strain MAFF 311018).